Consider the following 356-residue polypeptide: Galactosylgalactosylxylosylprotein 3-beta-glucuronosyltransferase sqv-8 (356 aa).

The Cytoplasmic segment spans residues 1–9; the sequence is MFPSRLLEK. Residues 10 to 30 traverse the membrane as a helical; Signal-anchor for type II membrane protein segment; the sequence is WWLRAFIALVIFFVWQLFYAI. Residues 31-356 lie on the Lumenal side of the membrane; that stretch reads NRVQSLEEER…LEAHALGVDN (326 aa). N-linked (GlcNAc...) asparagine glycosylation is found at N93 and N173. D208 is a binding site for Mn(2+). 2 N-linked (GlcNAc...) asparagine glycosylation sites follow: N246 and N272. Residue E294 is the Proton acceptor of the active site.

Belongs to the glycosyltransferase 43 family.

It is found in the membrane. The catalysed reaction is 3-O-(beta-D-galactosyl-(1-&gt;3)-beta-D-galactosyl-(1-&gt;4)-beta-D-xylosyl)-L-seryl-[protein] + UDP-alpha-D-glucuronate = 3-O-(beta-D-GlcA-(1-&gt;3)-beta-D-Gal-(1-&gt;3)-beta-D-Gal-(1-&gt;4)-beta-D-Xyl)-L-seryl-[protein] + UDP + H(+). Glycosyltransferase required for the biosynthesis of the tetrasaccharide (GlcA-Gal-Gal-Xyl-)Ser core linker of heparan sulfate and chondroitin sulfate. May be involved in the biosynthesis of the HNK-1 carbohydrate epitope on glycoproteins. Required for embryonic development. Involved in the elongation of the pharyngeal isthmus during the later stages of embryonic development. Involved in vulval epithelium invagination. The protein is Galactosylgalactosylxylosylprotein 3-beta-glucuronosyltransferase sqv-8 (sqv-8) of Caenorhabditis elegans.